Here is a 181-residue protein sequence, read N- to C-terminus: Cell division protein ZapC (181 aa).

It belongs to the ZapC family. In terms of assembly, interacts directly with FtsZ.

The protein localises to the cytoplasm. Contributes to the efficiency of the cell division process by stabilizing the polymeric form of the cell division protein FtsZ. Acts by promoting interactions between FtsZ protofilaments and suppressing the GTPase activity of FtsZ. This chain is Cell division protein ZapC, found in Shewanella woodyi (strain ATCC 51908 / MS32).